The chain runs to 180 residues: NADH-quinone oxidoreductase subunit I (180 aa).

4Fe-4S ferredoxin-type domains follow at residues 50–80 (LTRN…LQKS) and 90–119 (KFFR…LMPD). Positions 60, 63, 66, 70, 99, 102, 105, and 109 each coordinate [4Fe-4S] cluster.

This sequence belongs to the complex I 23 kDa subunit family. NDH-1 is composed of 13 different subunits. Subunits NuoA, H, J, K, L, M, N constitute the membrane sector of the complex. Requires [4Fe-4S] cluster as cofactor.

The protein localises to the cell membrane. It catalyses the reaction a quinone + NADH + 5 H(+)(in) = a quinol + NAD(+) + 4 H(+)(out). NDH-1 shuttles electrons from NADH, via FMN and iron-sulfur (Fe-S) centers, to quinones in the respiratory chain. The immediate electron acceptor for the enzyme in this species is believed to be ubiquinone. Couples the redox reaction to proton translocation (for every two electrons transferred, four hydrogen ions are translocated across the cytoplasmic membrane), and thus conserves the redox energy in a proton gradient. The polypeptide is NADH-quinone oxidoreductase subunit I (Buchnera aphidicola subsp. Schizaphis graminum (strain Sg)).